The chain runs to 432 residues: MQLLTIGINHHTAPVALRERVAFPLEQIKPALVTFKNVFLGPQAPNTPEAAILSTCNRTELYCATDDRAAREGALRWLSEYHRIPVDELAPHVYALPQSEAVRHAFRVASGLDSMVLGETQILGQMKDAVRTATEAGALGTYLNQLFQRTFAVAKEVRGTTEIGTQSVSMAAAAVRLAQRIFEKVSDQRVLFIGAGEMIELCATHFAAQGPRELVVANRTAERGQRLAERFNGRAMPLADLPTRMHEFDIIVSCTASTLPIIGLGAVERAVKARRHRPIFMVDLAVPRDIEPEVGKLKDVFLYTVDDLGAIVREGNASRQAAVAQAEAIIETRVQNFMQWLDTRSVVPVIRHMHTQADALRRAEVEKAQKLLARGDDPAAVLEALSQALTNKLIHGPTSALNRVNGADRDSLIDLMRGFYQHAPRSNDQSGH.

Residues 55-58 (TCNR), serine 114, 119-121 (ETQ), and glutamine 125 each bind substrate. Cysteine 56 acts as the Nucleophile in catalysis. 194–199 (GAGEMI) provides a ligand contact to NADP(+).

Belongs to the glutamyl-tRNA reductase family. As to quaternary structure, homodimer.

It catalyses the reaction (S)-4-amino-5-oxopentanoate + tRNA(Glu) + NADP(+) = L-glutamyl-tRNA(Glu) + NADPH + H(+). Its pathway is porphyrin-containing compound metabolism; protoporphyrin-IX biosynthesis; 5-aminolevulinate from L-glutamyl-tRNA(Glu): step 1/2. Its function is as follows. Catalyzes the NADPH-dependent reduction of glutamyl-tRNA(Glu) to glutamate 1-semialdehyde (GSA). This is Glutamyl-tRNA reductase from Burkholderia cenocepacia (strain ATCC BAA-245 / DSM 16553 / LMG 16656 / NCTC 13227 / J2315 / CF5610) (Burkholderia cepacia (strain J2315)).